The following is a 173-amino-acid chain: Membrane protein PM19L (173 aa).

4 helical membrane-spanning segments follow: residues 9–29 (IAPLLVLNLIMYLIVIGFASW), 43–63 (GVAGNGATFYFLVFAILAGVV), 83–103 (LAAGAASALIAWAITALAFGL), and 124–144 (FVIILAFTQLLYVAMLHGGLF).

As to expression, expressed in roots, leaf blades, leaf sheaths, stems, spikelets and embryos.

It localises to the membrane. Functionally, may be involved in abiotic stress response through abscisic acid-dependent signaling. In Oryza sativa subsp. japonica (Rice), this protein is Membrane protein PM19L.